The chain runs to 256 residues: MYLEQLKEVNPLTICITNNVVKNFTANGLLALGASPAMSECIEDLEDLLKVANALLINIGTLTKESWQLYQEAIKIANKNQVPVVLDPVAAGASRFRLEVSLDLLKNYSISLLRGNGSEIAALVGEKQASKGADGGKVADLESIAVKANQVFDVPVVVTGETDAIAVRGEVRLLQNGSPLMPLVTGTGCLLGAVLAAFIGSSDRSDDLACLTEAMTVYNVSGEIAEKVAKGKGVGSFQVAFLDALSQMKSEMIMDK.

M38 contributes to the substrate binding site. Residues R114 and T159 each coordinate ATP. A substrate-binding site is contributed by G186.

This sequence belongs to the Thz kinase family. The cofactor is Mg(2+).

It carries out the reaction 5-(2-hydroxyethyl)-4-methylthiazole + ATP = 4-methyl-5-(2-phosphooxyethyl)-thiazole + ADP + H(+). The protein operates within cofactor biosynthesis; thiamine diphosphate biosynthesis; 4-methyl-5-(2-phosphoethyl)-thiazole from 5-(2-hydroxyethyl)-4-methylthiazole: step 1/1. Functionally, catalyzes the phosphorylation of the hydroxyl group of 4-methyl-5-beta-hydroxyethylthiazole (THZ). The polypeptide is Hydroxyethylthiazole kinase (Streptococcus agalactiae serotype III (strain NEM316)).